Here is a 212-residue protein sequence, read N- to C-terminus: Probable GTP-binding protein EngB (212 aa).

The EngB-type G domain occupies 38-210; that stretch reads SLPEIAFVGK…KASLAKCIKF (173 aa). Residues 46–53, 73–77, 91–94, 158–161, and 189–191 each bind GTP; these read GKSNVGKS, GRTRQ, DLPG, TKSD, and VSN. Mg(2+) contacts are provided by S53 and T75.

Belongs to the TRAFAC class TrmE-Era-EngA-EngB-Septin-like GTPase superfamily. EngB GTPase family. Mg(2+) serves as cofactor.

Necessary for normal cell division and for the maintenance of normal septation. The polypeptide is Probable GTP-binding protein EngB (Rickettsia rickettsii (strain Sheila Smith)).